A 465-amino-acid polypeptide reads, in one-letter code: ATP synthase subunit beta (465 aa).

Residue Gly-152–Thr-159 participates in ATP binding.

Belongs to the ATPase alpha/beta chains family. F-type ATPases have 2 components, CF(1) - the catalytic core - and CF(0) - the membrane proton channel. CF(1) has five subunits: alpha(3), beta(3), gamma(1), delta(1), epsilon(1). CF(0) has three main subunits: a(1), b(2) and c(9-12). The alpha and beta chains form an alternating ring which encloses part of the gamma chain. CF(1) is attached to CF(0) by a central stalk formed by the gamma and epsilon chains, while a peripheral stalk is formed by the delta and b chains.

It is found in the cell inner membrane. It catalyses the reaction ATP + H2O + 4 H(+)(in) = ADP + phosphate + 5 H(+)(out). Functionally, produces ATP from ADP in the presence of a proton gradient across the membrane. The catalytic sites are hosted primarily by the beta subunits. The polypeptide is ATP synthase subunit beta (Campylobacter curvus (strain 525.92)).